The sequence spans 341 residues: Holliday junction branch migration complex subunit RuvB (341 aa).

The interval methionine 1–tyrosine 180 is large ATPase domain (RuvB-L). ATP contacts are provided by leucine 19, arginine 20, glycine 61, lysine 64, threonine 65, threonine 66, arginine 170, tyrosine 180, and arginine 217. Position 65 (threonine 65) interacts with Mg(2+). A small ATPAse domain (RuvB-S) region spans residues asparagine 181–glycine 251. Residues aspartate 254–phenylalanine 341 are head domain (RuvB-H). DNA is bound by residues arginine 309 and arginine 314.

Belongs to the RuvB family. In terms of assembly, homohexamer. Forms an RuvA(8)-RuvB(12)-Holliday junction (HJ) complex. HJ DNA is sandwiched between 2 RuvA tetramers; dsDNA enters through RuvA and exits via RuvB. An RuvB hexamer assembles on each DNA strand where it exits the tetramer. Each RuvB hexamer is contacted by two RuvA subunits (via domain III) on 2 adjacent RuvB subunits; this complex drives branch migration. In the full resolvosome a probable DNA-RuvA(4)-RuvB(12)-RuvC(2) complex forms which resolves the HJ.

The protein resides in the cytoplasm. It catalyses the reaction ATP + H2O = ADP + phosphate + H(+). In terms of biological role, the RuvA-RuvB-RuvC complex processes Holliday junction (HJ) DNA during genetic recombination and DNA repair, while the RuvA-RuvB complex plays an important role in the rescue of blocked DNA replication forks via replication fork reversal (RFR). RuvA specifically binds to HJ cruciform DNA, conferring on it an open structure. The RuvB hexamer acts as an ATP-dependent pump, pulling dsDNA into and through the RuvAB complex. RuvB forms 2 homohexamers on either side of HJ DNA bound by 1 or 2 RuvA tetramers; 4 subunits per hexamer contact DNA at a time. Coordinated motions by a converter formed by DNA-disengaged RuvB subunits stimulates ATP hydrolysis and nucleotide exchange. Immobilization of the converter enables RuvB to convert the ATP-contained energy into a lever motion, pulling 2 nucleotides of DNA out of the RuvA tetramer per ATP hydrolyzed, thus driving DNA branch migration. The RuvB motors rotate together with the DNA substrate, which together with the progressing nucleotide cycle form the mechanistic basis for DNA recombination by continuous HJ branch migration. Branch migration allows RuvC to scan DNA until it finds its consensus sequence, where it cleaves and resolves cruciform DNA. The polypeptide is Holliday junction branch migration complex subunit RuvB (Leptospira borgpetersenii serovar Hardjo-bovis (strain JB197)).